The chain runs to 335 residues: Probable deoxyhypusine synthase (335 aa).

Residue lysine 308 is the Nucleophile of the active site.

The protein belongs to the deoxyhypusine synthase family. The cofactor is NAD(+).

It carries out the reaction [eIF5A protein]-L-lysine + spermidine = [eIF5A protein]-deoxyhypusine + propane-1,3-diamine. The protein operates within protein modification; eIF5A hypusination. In terms of biological role, catalyzes the NAD-dependent oxidative cleavage of spermidine and the subsequent transfer of the butylamine moiety of spermidine to the epsilon-amino group of a specific lysine residue of the eIF-5A precursor protein to form the intermediate deoxyhypusine residue. The polypeptide is Probable deoxyhypusine synthase (Thermococcus onnurineus (strain NA1)).